Reading from the N-terminus, the 651-residue chain is Acetyl-coenzyme A synthetase (651 aa).

Residues 189-192, threonine 311, and asparagine 335 contribute to the CoA site; that span reads RGGK. Residues 387–389, 411–416, aspartate 500, and arginine 515 each bind ATP; these read GEP and DTWWQT. CoA is bound at residue serine 523. Arginine 526 lines the ATP pocket. Valine 537, histidine 539, and valine 542 together coordinate Mg(2+). CoA is bound at residue arginine 586. Lysine 611 is subject to N6-acetyllysine.

The protein belongs to the ATP-dependent AMP-binding enzyme family. It depends on Mg(2+) as a cofactor. In terms of processing, acetylated. Deacetylation by the SIR2-homolog deacetylase activates the enzyme.

It carries out the reaction acetate + ATP + CoA = acetyl-CoA + AMP + diphosphate. Functionally, catalyzes the conversion of acetate into acetyl-CoA (AcCoA), an essential intermediate at the junction of anabolic and catabolic pathways. AcsA undergoes a two-step reaction. In the first half reaction, AcsA combines acetate with ATP to form acetyl-adenylate (AcAMP) intermediate. In the second half reaction, it can then transfer the acetyl group from AcAMP to the sulfhydryl group of CoA, forming the product AcCoA. The protein is Acetyl-coenzyme A synthetase of Brucella melitensis biotype 2 (strain ATCC 23457).